The chain runs to 114 residues: MICOS complex subunit MIC12 (114 aa).

Residues 4 to 26 form a helical membrane-spanning segment; sequence IAKLGSFTLVSGVVATSCYYYFI.

It belongs to the MICOS complex subunit Mic12 family. As to quaternary structure, component of the mitochondrial contact site and cristae organizing system (MICOS) complex.

It localises to the mitochondrion inner membrane. Functionally, component of the MICOS complex, a large protein complex of the mitochondrial inner membrane that plays crucial roles in the maintenance of crista junctions, inner membrane architecture, and formation of contact sites to the outer membrane. This is MICOS complex subunit MIC12 (AIM5) from Candida glabrata (strain ATCC 2001 / BCRC 20586 / JCM 3761 / NBRC 0622 / NRRL Y-65 / CBS 138) (Yeast).